A 705-amino-acid polypeptide reads, in one-letter code: Choline transporter-like protein 2 (705 aa).

At 1–33 (MGKDSQHYYGKHGTPQKYDPTFKGPIYNRGCTD) the chain is on the cytoplasmic side. The residue at position 14 (threonine 14) is a Phosphothreonine. A helical transmembrane segment spans residues 34–54 (IICCVLLFLAIVGYVAVGIIA). The Extracellular segment spans residues 55-232 (WTHGDPRKVI…QIFEDYTVSW (178 aa)). Residues asparagine 187 and asparagine 200 are each glycosylated (N-linked (GlcNAc...) asparagine). The helical transmembrane segment at 233–253 (YWIVIGLVIAMLLSLMFIVLL) threads the bilayer. Topologically, residues 254 to 256 (RFL) are cytoplasmic. A helical transmembrane segment spans residues 257–277 (AGVMVWVMIVMVILVLGYGIF). The Extracellular portion of the chain corresponds to 278 to 315 (HCYAEYSRLRGEAGSDVSLVDLGFQTDLRVYLHLRQTW). Residues 316-336 (MAFMIILSILEVVIILLLIFL) traverse the membrane as a helical segment. Over 337 to 364 (RKRILIAIALIKEASRAVGHVMCSMLYP) the chain is Cytoplasmic. The chain crosses the membrane as a helical span at residues 365 to 385 (LVTFFLLCLCIAYWASTSVFL). The Extracellular segment spans residues 386 to 453 (STSNVAVYKI…LQIFNAFMFF (68 aa)). N-linked (GlcNAc...) asparagine glycosylation is present at asparagine 416. Residues 454–476 (WLANFVLALGQVTLAGAFASYYW) form a helical membrane-spanning segment. At 477–503 (AMRKPDDMPAFPLFSAFGRALRYHTGS) the chain is on the cytoplasmic side. A helical transmembrane segment spans residues 504–524 (LAFGSLILAIVQIIRVMLEYL). Topologically, residues 525–562 (DQRLKAAQNKFAKFLMVCLKCCFWCLEKFIKFLNRNAY) are extracellular. The helical transmembrane segment at 563 to 583 (IMIAIYGTNFCTSARNAFFLL) threads the bilayer. Topologically, residues 584–598 (MRNIIRVAVLDKVTD) are cytoplasmic. The helical transmembrane segment at 599 to 619 (FLFLLGKLLIVGSVGILAFFF) threads the bilayer. The Extracellular segment spans residues 620–637 (FTHRIRIVQDTAPPLNYY). Residues 638 to 658 (WVPILTVIIGSYLIAHGFFSV) form a helical membrane-spanning segment. Over 659 to 705 (YGMCVDTLFLCFLEDLERNDGSAERPYFMSSTLKKLLNKTNKKVAES) the chain is Cytoplasmic.

It belongs to the CTL (choline transporter-like) family. In terms of assembly, interacts with COCH. Post-translationally, N-glycosylated.

Its subcellular location is the cell membrane. It is found in the mitochondrion outer membrane. It carries out the reaction choline(out) + n H(+)(in) = choline(in) + n H(+)(out). The catalysed reaction is ethanolamine(out) + n H(+)(in) = ethanolamine(in) + n H(+)(out). Functionally, exhibits choline transporter activity, as choline/H+ antiporter. Also acts as a low-affinity ethanolamine/H+ antiporter, regulating the supply of extracellular ethanolamine (Etn) for the CDP-Etn pathway, redistribute intracellular Etn and balance the CDP-Cho and CDP-Etn arms of the Kennedy pathway. The chain is Choline transporter-like protein 2 (Slc44a2) from Rattus norvegicus (Rat).